The chain runs to 239 residues: uncharacterized protein (239 aa).

The interval R193–S214 is disordered.

The protein resides in the nucleus. This is an uncharacterized protein from Schizosaccharomyces pombe (strain 972 / ATCC 24843) (Fission yeast).